Reading from the N-terminus, the 61-residue chain is Photosystem II reaction center protein K (61 aa).

A propeptide spanning residues 1–24 is cleaved from the precursor; sequence MLNIFSLMYICLNSALYSSSFLFA. Residues 40 to 60 form a helical membrane-spanning segment; sequence MPVIPVLFFLLAFVWQAAVSF.

This sequence belongs to the PsbK family. In terms of assembly, PSII is composed of 1 copy each of membrane proteins PsbA, PsbB, PsbC, PsbD, PsbE, PsbF, PsbH, PsbI, PsbJ, PsbK, PsbL, PsbM, PsbT, PsbX, PsbY, PsbZ, Psb30/Ycf12, at least 3 peripheral proteins of the oxygen-evolving complex and a large number of cofactors. It forms dimeric complexes.

It localises to the plastid. Its subcellular location is the chloroplast thylakoid membrane. Functionally, one of the components of the core complex of photosystem II (PSII). PSII is a light-driven water:plastoquinone oxidoreductase that uses light energy to abstract electrons from H(2)O, generating O(2) and a proton gradient subsequently used for ATP formation. It consists of a core antenna complex that captures photons, and an electron transfer chain that converts photonic excitation into a charge separation. The chain is Photosystem II reaction center protein K from Citrus sinensis (Sweet orange).